The following is a 122-amino-acid chain: Large ribosomal subunit protein uL14 (122 aa).

It belongs to the universal ribosomal protein uL14 family. In terms of assembly, part of the 50S ribosomal subunit. Forms a cluster with proteins L3 and L19. In the 70S ribosome, L14 and L19 interact and together make contacts with the 16S rRNA in bridges B5 and B8.

Its function is as follows. Binds to 23S rRNA. Forms part of two intersubunit bridges in the 70S ribosome. The protein is Large ribosomal subunit protein uL14 of Rickettsia typhi (strain ATCC VR-144 / Wilmington).